We begin with the raw amino-acid sequence, 270 residues long: Glutamate racemase (270 aa).

Substrate is bound by residues 14–15 and 46–47; these read DS and YG. C77 acts as the Proton donor/acceptor in catalysis. 78 to 79 is a binding site for substrate; that stretch reads NT. The active-site Proton donor/acceptor is the C189. 190–191 lines the substrate pocket; sequence TH.

It belongs to the aspartate/glutamate racemases family.

The enzyme catalyses L-glutamate = D-glutamate. Its pathway is cell wall biogenesis; peptidoglycan biosynthesis. Provides the (R)-glutamate required for cell wall biosynthesis. This chain is Glutamate racemase, found in Neisseria meningitidis serogroup A / serotype 4A (strain DSM 15465 / Z2491).